Here is a 464-residue protein sequence, read N- to C-terminus: MLKIFNSYTRLQEQLEVDKKKTINMYVCGITAYDFCHIGHGRTFIFFDVVVRYLRSLGYALKYVRNITDIDDKIIAASLKNNESYISLSNRMISNMKDDFSALNILPPDSEPRVTENISDIIKFISILLNKKHAYVACNGDIMFSVSSYLNYGALSNQFSKILNKEINISHYSTKKNIADFALWKTSKSSIFVGWNSPWGNGRPGWHIECSSMCRSAFKNKIDIHGGGVDLLFPHHENELAQSVCIDSNFSIKHWMHTGLVIINNEKMSKSLNNTLLLRDLLTQYDSEIIRFFLLSTHYRHPLYFCYKNLSNSSKLLKKLYLSLRGVDFDIKGLDIVDNFKTDFYKAMNSDFNTPLALSILLRLSKEINKFKLIDSNKASQLASKLRQLGSILGILLKDPEYFLQNNFNCNNSIIGKINSLIYERDKARRVKDWVRADRIRKELLELGIVLEDTSFNTFWRSLQ.

Residue cysteine 28 participates in Zn(2+) binding. Positions 30–40 match the 'HIGH' region motif; that stretch reads ITAYDFCHIGH. Zn(2+) is bound by residues cysteine 210, histidine 235, and glutamate 239. Residues 267–271 carry the 'KMSKS' region motif; the sequence is KMSKS. Lysine 270 contributes to the ATP binding site.

Belongs to the class-I aminoacyl-tRNA synthetase family. Monomer. The cofactor is Zn(2+).

It localises to the cytoplasm. The catalysed reaction is tRNA(Cys) + L-cysteine + ATP = L-cysteinyl-tRNA(Cys) + AMP + diphosphate. This is Cysteine--tRNA ligase from Buchnera aphidicola subsp. Baizongia pistaciae (strain Bp).